A 91-amino-acid polypeptide reads, in one-letter code: Putative regulatory protein Helmi_20580 (91 aa).

Belongs to the RemA family.

This is Putative regulatory protein Helmi_20580 from Heliobacterium modesticaldum (strain ATCC 51547 / Ice1).